A 215-amino-acid polypeptide reads, in one-letter code: Probable GTP-binding protein EngB (215 aa).

The 175-residue stretch at 30–204 (EGLEVAFAGR…QMVLAQWLGL (175 aa)) folds into the EngB-type G domain. GTP-binding positions include 38 to 45 (GRSNAGKS), 64 to 68 (GRTQL), 82 to 85 (DLPG), 149 to 152 (TKAD), and 182 to 185 (LFSA). 2 residues coordinate Mg(2+): Ser-45 and Thr-66.

This sequence belongs to the TRAFAC class TrmE-Era-EngA-EngB-Septin-like GTPase superfamily. EngB GTPase family. Mg(2+) is required as a cofactor.

Functionally, necessary for normal cell division and for the maintenance of normal septation. The polypeptide is Probable GTP-binding protein EngB (Pseudomonas paraeruginosa (strain DSM 24068 / PA7) (Pseudomonas aeruginosa (strain PA7))).